The sequence spans 208 residues: Protein-L-isoaspartate O-methyltransferase (208 aa).

S59 is an active-site residue.

This sequence belongs to the methyltransferase superfamily. L-isoaspartyl/D-aspartyl protein methyltransferase family.

The protein resides in the cytoplasm. It catalyses the reaction [protein]-L-isoaspartate + S-adenosyl-L-methionine = [protein]-L-isoaspartate alpha-methyl ester + S-adenosyl-L-homocysteine. Functionally, catalyzes the methyl esterification of L-isoaspartyl residues in peptides and proteins that result from spontaneous decomposition of normal L-aspartyl and L-asparaginyl residues. It plays a role in the repair and/or degradation of damaged proteins. The sequence is that of Protein-L-isoaspartate O-methyltransferase from Aliivibrio fischeri (strain MJ11) (Vibrio fischeri).